A 599-amino-acid polypeptide reads, in one-letter code: Sulfite reductase [NADPH] flavoprotein alpha-component (599 aa).

Residues 64-202 enclose the Flavodoxin-like domain; the sequence is VTLISASQTG…AASEWRARVV (139 aa). Residues 70-75, 117-120, and 153-162 each bind FMN; these read SQTGNA, STQG, and LGDTSYEFFC. Positions 234-448 constitute an FAD-binding FR-type domain; sequence DAPLIATLSV…IEHNDNFRLP (215 aa). FAD is bound by residues threonine 322, alanine 356, 386 to 389, 404 to 406, tyrosine 410, and 419 to 422; these read RLYS, TVG, and GGAS. Residues 519–520, 525–529, and aspartate 561 each bind NADP(+); these read SR and KIYVQ. Tyrosine 599 is a binding site for FAD.

The protein belongs to the NADPH-dependent sulphite reductase flavoprotein subunit CysJ family. It in the N-terminal section; belongs to the flavodoxin family. This sequence in the C-terminal section; belongs to the flavoprotein pyridine nucleotide cytochrome reductase family. As to quaternary structure, alpha(8)-beta(8). The alpha component is a flavoprotein, the beta component is a hemoprotein. FAD is required as a cofactor. Requires FMN as cofactor.

The catalysed reaction is hydrogen sulfide + 3 NADP(+) + 3 H2O = sulfite + 3 NADPH + 4 H(+). The protein operates within sulfur metabolism; hydrogen sulfide biosynthesis; hydrogen sulfide from sulfite (NADPH route): step 1/1. Its function is as follows. Component of the sulfite reductase complex that catalyzes the 6-electron reduction of sulfite to sulfide. This is one of several activities required for the biosynthesis of L-cysteine from sulfate. The flavoprotein component catalyzes the electron flow from NADPH -&gt; FAD -&gt; FMN to the hemoprotein component. The chain is Sulfite reductase [NADPH] flavoprotein alpha-component from Salmonella typhimurium (strain LT2 / SGSC1412 / ATCC 700720).